Reading from the N-terminus, the 228-residue chain is Max-interacting protein 1 (228 aa).

2 disordered regions span residues 30 to 76 (YASS…NELE) and 160 to 228 (SIGS…SFAS). Over residues 43–56 (QHSKPPRRLSRAQK) the composition is skewed to basic residues. The segment covering 57–70 (HSSGSSNTSTANRS) has biased composition (polar residues). The region spanning 67–119 (ANRSTHNELEKNRRAHLRLCLERLKVLIPLGPDCTRHTTLGLLNKAKAHIKKL) is the bHLH domain. Residues 173-183 (EREEIEVDVES) are compositionally biased toward acidic residues. Residues 207 to 228 (SLQSVGSDEGYSSASVKLSFAS) show a composition bias toward polar residues.

In terms of assembly, efficient DNA binding requires dimerization with another bHLH protein. Binds DNA as a heterodimer with MAX. Interacts with SMC3. Interacts with RNF17.

The protein resides in the nucleus. In terms of biological role, transcriptional repressor. MXI1 binds with MAX to form a sequence-specific DNA-binding protein complex which recognizes the core sequence 5'-CAC[GA]TG-3'. MXI1 thus antagonizes MYC transcriptional activity by competing for MAX. Isoform Short, which lacks a segment, has a much stronger suppressive potential and associates with a SIN3 homologous protein. The chain is Max-interacting protein 1 (Mxi1) from Mus musculus (Mouse).